A 284-amino-acid chain; its full sequence is Type II methyltransferase M1.DpnII (284 aa).

Residues Trp-17, Lys-21, Gly-46, Asp-62, Asp-177, Phe-178, and Asp-194 each contribute to the S-adenosyl-L-methionine site.

It belongs to the N(4)/N(6)-methyltransferase family. As to quaternary structure, monomer. Homodimer.

The catalysed reaction is a 2'-deoxyadenosine in DNA + S-adenosyl-L-methionine = an N(6)-methyl-2'-deoxyadenosine in DNA + S-adenosyl-L-homocysteine + H(+). Its function is as follows. An alpha subtype methylase that recognizes the double-stranded sequence 5'-GATC-3', methylates A-2 on both strands, and protects the DNA from cleavage by the DpnII endonuclease. The polypeptide is Type II methyltransferase M1.DpnII (Streptococcus pneumoniae).